Here is a 430-residue protein sequence, read N- to C-terminus: Enolase (430 aa).

Position 163 (Gln-163) interacts with (2R)-2-phosphoglycerate. The active-site Proton donor is the Glu-205. Mg(2+) contacts are provided by Asp-242, Glu-287, and Asp-314. (2R)-2-phosphoglycerate contacts are provided by Lys-339, Arg-368, Ser-369, and Lys-390. Lys-339 (proton acceptor) is an active-site residue.

The protein belongs to the enolase family. Mg(2+) serves as cofactor.

Its subcellular location is the cytoplasm. It is found in the secreted. The protein resides in the cell surface. The catalysed reaction is (2R)-2-phosphoglycerate = phosphoenolpyruvate + H2O. Its pathway is carbohydrate degradation; glycolysis; pyruvate from D-glyceraldehyde 3-phosphate: step 4/5. Functionally, catalyzes the reversible conversion of 2-phosphoglycerate (2-PG) into phosphoenolpyruvate (PEP). It is essential for the degradation of carbohydrates via glycolysis. The chain is Enolase from Exiguobacterium sp. (strain ATCC BAA-1283 / AT1b).